A 205-amino-acid chain; its full sequence is Protein Nef (205 aa).

G2 is lipidated: N-myristoyl glycine; by host. S6 is subject to Phosphoserine; by host. Residues E62 to D65 are acidic; interacts with host PACS1 and PACS2; stabilizes the interaction of NEF/MHC-I with host AP1M1; necessary for MHC-I internalization. Residues P69 to P78 form an SH3-binding; interaction with Src family tyrosine kinases region. A PxxP; stabilizes the interaction of NEF/MHC-I with host AP1M1; necessary for MHC-I internalization motif is present at residues P72–P75. A mediates dimerization, Nef-PTE1 interaction region spans residues E108–W124. The tract at residues V148 to V180 is binding to ATP6V1H. The short motif at L164–L165 is the Dileucine internalization motif; necessary for CD4 internalization element. Positions D174–D175 match the Diacidic; necessary for CD4 internalization motif.

Belongs to the lentivirus primate group Nef protein family. As to quaternary structure, monomer; cytosolic form. Homodimer; membrane bound form. Interacts with Nef associated p21-activated kinase (PAK2); this interaction activates PAK2. Associates with the Nef-MHC-I-AP1 complex; this complex is required for MHC-I internalization. Interacts (via C-terminus) with host PI3-kinase. Interacts with host PACS1; this interaction seems to be weak. Interacts with host PACS2. Interacts with host LCK and MAPK3; these interactions inhibit the kinase activity of the latter. Interacts with host ATP6V1H; this interaction may play a role in CD4 endocytosis. Associates with the CD4-Nef-AP2 complex; this complex is required for CD4 internalization. Interacts with host AP2 subunit alpha and AP2 subunit sigma2. Interacts with TCR-zeta chain; this interaction up-regulates the Fas ligand (FasL) surface expression. Interacts with host HCK, LYN, and SRC; these interactions activate the Src family kinases. Interacts with MAP3K5; this interaction inhibits the Fas and TNFR-mediated death signals. Interacts with beta-COP and PTE1. Interacts with human RACK1; this increases Nef phosphorylation by PKC. Interacts with TP53; this interaction decreases the half-life of TP53, protecting the infected cell against p53-mediated apoptosis. The virion-associated Nef proteins are cleaved by the viral protease to release the soluble C-terminal core protein. Nef is probably cleaved concomitantly with viral structural proteins on maturation of virus particles. In terms of processing, myristoylated. Post-translationally, phosphorylated on serine residues, probably by host PKCdelta and theta.

It localises to the host cell membrane. The protein localises to the virion. It is found in the secreted. The protein resides in the host Golgi apparatus membrane. Its function is as follows. Factor of infectivity and pathogenicity, required for optimal virus replication. Alters numerous pathways of T-lymphocyte function and down-regulates immunity surface molecules in order to evade host defense and increase viral infectivity. Alters the functionality of other immunity cells, like dendritic cells, monocytes/macrophages and NK cells. In terms of biological role, in infected CD4(+) T-lymphocytes, down-regulates the surface MHC-I, mature MHC-II, CD4, CD28, CCR5 and CXCR4 molecules. Mediates internalization and degradation of host CD4 through the interaction of with the cytoplasmic tail of CD4, the recruitment of AP-2 (clathrin adapter protein complex 2), internalization through clathrin coated pits, and subsequent transport to endosomes and lysosomes for degradation. Diverts host MHC-I molecules to the trans-Golgi network-associated endosomal compartments by an endocytic pathway to finally target them for degradation. MHC-I down-regulation may involve AP-1 (clathrin adapter protein complex 1) or possibly Src family kinase-ZAP70/Syk-PI3K cascade recruited by PACS2. In consequence infected cells are masked for immune recognition by cytotoxic T-lymphocytes. Decreasing the number of immune receptors also prevents reinfection by more HIV particles (superinfection). Down-regulates host SERINC3 and SERINC5 thereby excluding these proteins from the viral particles. Virion infectivity is drastically higher when SERINC3 or SERINC5 are excluded from the viral envelope, because these host antiviral proteins impair the membrane fusion event necessary for subsequent virion penetration. Functionally, bypasses host T-cell signaling by inducing a transcriptional program nearly identical to that of anti-CD3 cell activation. Interaction with TCR-zeta chain up-regulates the Fas ligand (FasL). Increasing surface FasL molecules and decreasing surface MHC-I molecules on infected CD4(+) cells send attacking cytotoxic CD8+ T-lymphocytes into apoptosis. Plays a role in optimizing the host cell environment for viral replication without causing cell death by apoptosis. Protects the infected cells from apoptosis in order to keep them alive until the next virus generation is ready to strike. Inhibits the Fas and TNFR-mediated death signals by blocking MAP3K5/ASK1. Decreases the half-life of TP53, protecting the infected cell against p53-mediated apoptosis. Inhibits the apoptotic signals regulated by the Bcl-2 family proteins through the formation of a Nef/PI3-kinase/PAK2 complex that leads to activation of PAK2 and induces phosphorylation of host BAD. Its function is as follows. Extracellular Nef protein targets CD4(+) T-lymphocytes for apoptosis by interacting with CXCR4 surface receptors. The chain is Protein Nef from Human immunodeficiency virus type 1 group M subtype A (isolate U455) (HIV-1).